Consider the following 507-residue polypeptide: RNA-splicing ligase RtcB homolog (507 aa).

Residues Asp121, Cys124, His229, His261, and His355 each contribute to the Mn(2+) site. 228 to 232 is a binding site for GMP; sequence NHYGE. GMP is bound by residues 355 to 356, 404 to 407, Ser411, 430 to 433, and Lys506; these read HN, GGTM, and HGSG. His430 acts as the GMP-histidine intermediate in catalysis.

It belongs to the RtcB family. As to quaternary structure, catalytic component of the tRNA-splicing ligase complex. Mn(2+) is required as a cofactor.

The enzyme catalyses a 3'-end 3'-phospho-ribonucleotide-RNA + a 5'-end dephospho-ribonucleoside-RNA + GTP = a ribonucleotidyl-ribonucleotide-RNA + GMP + diphosphate. It catalyses the reaction a 3'-end 2',3'-cyclophospho-ribonucleotide-RNA + a 5'-end dephospho-ribonucleoside-RNA + GTP + H2O = a ribonucleotidyl-ribonucleotide-RNA + GMP + diphosphate + H(+). Functionally, catalytic subunit of the tRNA-splicing ligase complex that acts by directly joining spliced tRNA halves to mature-sized tRNAs by incorporating the precursor-derived splice junction phosphate into the mature tRNA as a canonical 3',5'-phosphodiester. May act as an RNA ligase with broad substrate specificity, and may function toward other RNAs. The polypeptide is RNA-splicing ligase RtcB homolog (Theileria parva (East coast fever infection agent)).